A 112-amino-acid chain; its full sequence is Large ribosomal subunit protein eL30 (112 aa).

This sequence belongs to the eukaryotic ribosomal protein eL30 family.

This is Large ribosomal subunit protein eL30 (rpl30) from Dictyostelium discoideum (Social amoeba).